The chain runs to 204 residues: Guanylate kinase (204 aa).

A Guanylate kinase-like domain is found at 18 to 196 (PKLFTISAPA…SYEVLKSIFI (179 aa)). Residue 25–32 (APAGAGKT) coordinates ATP.

It belongs to the guanylate kinase family.

It is found in the cytoplasm. The catalysed reaction is GMP + ATP = GDP + ADP. In terms of biological role, essential for recycling GMP and indirectly, cGMP. The protein is Guanylate kinase of Chlamydia abortus (strain DSM 27085 / S26/3) (Chlamydophila abortus).